Here is a 528-residue protein sequence, read N- to C-terminus: Extracellular serine/threonine protein CG31145 (528 aa).

The Cytoplasmic segment spans residues 1–12 (MAVLRTMKLKER). Positions 1 to 76 (MAVLRTMKLK…LHEFKRKFLQ (76 aa)) are excised as a propeptide. Residues 13 to 33 (LVISLGATLVLLTLLLIVDVQ) form a helical membrane-spanning segment. Topologically, residues 34–528 (MDFGVANRHL…VDGSETDVSS (495 aa)) are lumenal. The tract at residues 77-130 (KSNASGSKEASTQAGASQSGGATSGQDAAAGASGGAAGPGTSRSTSTRKPTPHD) is disordered. Asn-79 carries N-linked (GlcNAc...) asparagine glycosylation. Low complexity predominate over residues 86–107 (ASTQAGASQSGGATSGQDAAAG). Asn-173 is a glycosylation site (N-linked (GlcNAc...) asparagine). Gln-220, Lys-236, and Glu-257 together coordinate ATP. Glu-257 contacts Mn(2+). Asn-286 is a glycosylation site (N-linked (GlcNAc...) asparagine). 2 cysteine pairs are disulfide-bonded: Cys-312–Cys-328 and Cys-317–Cys-321. 339–342 (AAFL) is an ATP binding site. Cystine bridges form between Cys-376–Cys-450 and Cys-451–Cys-510. Asp-408 is a catalytic residue. Position 413 (Glu-413) interacts with ATP. N-linked (GlcNAc...) asparagine glycosylation occurs at Asn-420. ATP is bound at residue Asp-428. Asp-428 provides a ligand contact to Mn(2+).

This sequence belongs to the FAM20 family. Requires Mn(2+) as cofactor. In terms of tissue distribution, in embryos, prominently expressed in midline glia, salivary gland, intestine and dorsal vessel (heart). Not associated with biomineralization.

It is found in the golgi apparatus membrane. It localises to the secreted. The catalysed reaction is L-seryl-[protein] + ATP = O-phospho-L-seryl-[protein] + ADP + H(+). It catalyses the reaction L-threonyl-[protein] + ATP = O-phospho-L-threonyl-[protein] + ADP + H(+). In terms of biological role, golgi serine/threonine protein kinase that phosphorylates secretory pathway proteins within Ser-x-Glu/pSer motifs. The protein is Extracellular serine/threonine protein CG31145 of Drosophila melanogaster (Fruit fly).